We begin with the raw amino-acid sequence, 201 residues long: Small ribosomal subunit protein uS4 (201 aa).

The 67-residue stretch at 91–157 folds into the S4 RNA-binding domain; it reads CRLDNVVYRA…TPFIIAKETI (67 aa).

Belongs to the universal ribosomal protein uS4 family. Part of the 30S ribosomal subunit. Contacts protein S5. The interaction surface between S4 and S5 is involved in control of translational fidelity.

Functionally, one of the primary rRNA binding proteins, it binds directly to 16S rRNA where it nucleates assembly of the body of the 30S subunit. With S5 and S12 plays an important role in translational accuracy. The protein is Small ribosomal subunit protein uS4 of Saccharopolyspora erythraea (strain ATCC 11635 / DSM 40517 / JCM 4748 / NBRC 13426 / NCIMB 8594 / NRRL 2338).